A 420-amino-acid polypeptide reads, in one-letter code: Histidine--tRNA ligase (420 aa).

This sequence belongs to the class-II aminoacyl-tRNA synthetase family. In terms of assembly, homodimer.

Its subcellular location is the cytoplasm. It carries out the reaction tRNA(His) + L-histidine + ATP = L-histidyl-tRNA(His) + AMP + diphosphate + H(+). This Saccharopolyspora erythraea (strain ATCC 11635 / DSM 40517 / JCM 4748 / NBRC 13426 / NCIMB 8594 / NRRL 2338) protein is Histidine--tRNA ligase.